A 400-amino-acid polypeptide reads, in one-letter code: MKALFFTRMFTLMVSCLMYLSIVKEDNWFGYVFIAAGAAMYAANHVLLTKETNAIWFCLIDIAIGFSFGFIFPGTGLFIIMLCPVAVAFFLRGFPKRTAWSVLCLSSILFLTVLIRTYAMFGNEFVIDHLTSMTFVVFCGVVGKLIRKLLDAQDTAKQQFQELTESHLALSAAHQELHLYAKQVEELTAIYERNRMAREIHDTVGHKMTALLVQLQLLREWQKRDSQKADETVGVCETLAREALDDVRLSVRTLQTENDPSLIESLKQLTEDFCKNAGVTTEFAVSGDPAIIPLSLHPTLIRTVQEALTNAKRHGGAAACSIQLACTTDSISLVIKDDGKGNPEAALGFGLLNMKKRAAEHGGMIRFESERDQGFTVNAEFSLANKKWSFGPVQQKESLS.

Residues 1–2 (MK) are Extracellular-facing. The helical transmembrane segment at 3-23 (ALFFTRMFTLMVSCLMYLSIV) threads the bilayer. At 24–27 (KEDN) the chain is on the cytoplasmic side. The helical transmembrane segment at 28 to 48 (WFGYVFIAAGAAMYAANHVLL) threads the bilayer. The Extracellular segment spans residues 49-61 (TKETNAIWFCLID). Residues 62–82 (IAIGFSFGFIFPGTGLFIIML) form a helical membrane-spanning segment. Topologically, residues 83–101 (CPVAVAFFLRGFPKRTAWS) are cytoplasmic. Residues 102-122 (VLCLSSILFLTVLIRTYAMFG) traverse the membrane as a helical segment. Topologically, residues 123–125 (NEF) are extracellular. A helical membrane pass occupies residues 126-146 (VIDHLTSMTFVVFCGVVGKLI). At 147–400 (RKLLDAQDTA…GPVQQKESLS (254 aa)) the chain is on the cytoplasmic side. Residues 190 to 385 (IYERNRMARE…TVNAEFSLAN (196 aa)) enclose the Histidine kinase domain. H201 is modified (phosphohistidine; by autocatalysis).

Post-translationally, autophosphorylated.

Its subcellular location is the cell membrane. The catalysed reaction is ATP + protein L-histidine = ADP + protein N-phospho-L-histidine.. Required for resistance to linearmycins, a family of antibiotic-specialized metabolites produced by some streptomycetes. Member of the two-component regulatory system LnrJ/LnrK, which induces expression of the LnrLMN ABC transporter in response to linearmycins and other polyenes. Acts as a specific sensor for linearmycin, either directly through binding or indirectly through membrane perturbation. Probably activates LnrK by phosphorylation. May also promote biofilm formation. This Bacillus subtilis (strain 168) protein is Sensor histidine kinase LnrJ.